Consider the following 1026-residue polypeptide: uncharacterized protein (1026 aa).

WD repeat units follow at residues 14–53 (LLDEGLDVSSIHCFDQYLIVGQCSGQVMVFDVSTDNHFTL), 62–104 (HSVS…RRAT), 148–187 (GHEDWPILFPFKDEALLIPVAYSDGSVSLWSVDWSALTFK), and 937–977 (NAEC…VKFL).

The protein localises to the cytoplasm. Its subcellular location is the nucleus. This is an uncharacterized protein from Schizosaccharomyces pombe (strain 972 / ATCC 24843) (Fission yeast).